The primary structure comprises 396 residues: S-adenosylmethionine synthase (396 aa).

His-16 serves as a coordination point for ATP. Asp-18 contacts Mg(2+). Glu-44 serves as a coordination point for K(+). Residues Glu-57 and Gln-100 each coordinate L-methionine. A flexible loop region spans residues 100–110 (QSVDIAQGVDR). ATP-binding positions include 165–167 (DAK), 231–232 (KF), Asp-240, 246–247 (RK), Ala-263, and Lys-267. Asp-240 serves as a coordination point for L-methionine. Lys-271 is an L-methionine binding site.

Belongs to the AdoMet synthase family. Homotetramer; dimer of dimers. Mg(2+) serves as cofactor. It depends on K(+) as a cofactor.

Its subcellular location is the cytoplasm. It carries out the reaction L-methionine + ATP + H2O = S-adenosyl-L-methionine + phosphate + diphosphate. It functions in the pathway amino-acid biosynthesis; S-adenosyl-L-methionine biosynthesis; S-adenosyl-L-methionine from L-methionine: step 1/1. Its function is as follows. Catalyzes the formation of S-adenosylmethionine (AdoMet) from methionine and ATP. The overall synthetic reaction is composed of two sequential steps, AdoMet formation and the subsequent tripolyphosphate hydrolysis which occurs prior to release of AdoMet from the enzyme. The chain is S-adenosylmethionine synthase from Marinobacter nauticus (strain ATCC 700491 / DSM 11845 / VT8) (Marinobacter aquaeolei).